Consider the following 32-residue polypeptide: Photosystem II reaction center protein T (32 aa).

The chain crosses the membrane as a helical span at residues 3-23 (TLVYTFLLIGTLAVLFAAVFF).

The protein belongs to the PsbT family. As to quaternary structure, PSII is composed of 1 copy each of membrane proteins PsbA, PsbB, PsbC, PsbD, PsbE, PsbF, PsbH, PsbI, PsbJ, PsbK, PsbL, PsbM, PsbT, PsbX, PsbY, PsbZ, Psb30/Ycf12, at least 3 peripheral proteins of the oxygen-evolving complex and a large number of cofactors. It forms dimeric complexes.

The protein localises to the plastid. Its subcellular location is the chloroplast thylakoid membrane. Functionally, found at the monomer-monomer interface of the photosystem II (PS II) dimer, plays a role in assembly and dimerization of PSII. PSII is a light-driven water plastoquinone oxidoreductase, using light energy to abstract electrons from H(2)O, generating a proton gradient subsequently used for ATP formation. This chain is Photosystem II reaction center protein T, found in Guillardia theta (Cryptophyte).